We begin with the raw amino-acid sequence, 234 residues long: Enterobactin synthase component D (234 aa).

Mg(2+)-binding residues include D107, E109, and E152.

This sequence belongs to the P-Pant transferase superfamily. EntD family. In terms of assembly, entB, EntD, EntE, and EntF form a multienzyme complex called enterobactin synthase. Mg(2+) is required as a cofactor.

The protein localises to the membrane. It catalyses the reaction apo-[aryl-carrier protein] + CoA = holo-[aryl-carrier protein] + adenosine 3',5'-bisphosphate + H(+). The enzyme catalyses apo-[peptidyl-carrier protein] + CoA = holo-[peptidyl-carrier protein] + adenosine 3',5'-bisphosphate + H(+). It functions in the pathway siderophore biosynthesis; enterobactin biosynthesis. Involved in the biosynthesis of the siderophore enterobactin (enterochelin), which is a macrocyclic trimeric lactone of N-(2,3-dihydroxybenzoyl)-serine. The serine trilactone serves as a scaffolding for the three catechol functionalities that provide hexadentate coordination for the tightly ligated iron(2+) atoms. Plays an essential role in the assembly of the enterobactin by catalyzing the transfer of the 4'-phosphopantetheine (Ppant) moiety from coenzyme A to the apo-domains of both EntB (ArCP domain) and EntF (PCP domain) to yield their holo-forms which make them competent for the activation of 2,3-dihydroxybenzoate (DHB) and L-serine, respectively. This is Enterobactin synthase component D from Salmonella typhimurium (strain LT2 / SGSC1412 / ATCC 700720).